Here is a 250-residue protein sequence, read N- to C-terminus: Superoxide dismutase 1 copper chaperone (250 aa).

The HMA domain maps to 4-67 (SFEIVFAVPM…AIQSTGKDAI (64 aa)). Positions 15, 18, 229, and 231 each coordinate Cu cation.

It belongs to the CCS1 family. Cu(2+) is required as a cofactor.

The protein localises to the cytoplasm. Copper chaperone for superoxide dismutase 1 (SOD1). Binds copper ions and delivers them specifically to SOD1. The polypeptide is Superoxide dismutase 1 copper chaperone (CCS1) (Debaryomyces hansenii (strain ATCC 36239 / CBS 767 / BCRC 21394 / JCM 1990 / NBRC 0083 / IGC 2968) (Yeast)).